A 368-amino-acid polypeptide reads, in one-letter code: D-Ala-D/L-Ala epimerase (368 aa).

Substrate-binding positions include T135 and 160 to 162 (KVK). The Mg(2+) site is built by D190, E216, and D241. Substrate contacts are provided by residues K265 and 318 to 320 (DFD).

It belongs to the mandelate racemase/muconate lactonizing enzyme family. Mg(2+) is required as a cofactor.

In terms of biological role, catalyzes the epimerization of D-Ala-D-Ala to D-Ala-L-Ala. Has broad substrate specificity and catalyzes the epimerization of a variety of dipeptides containing an N-terminal Ala followed by a hydrophobic or polar residue, such as Val, Ser and Met (in vitro). The polypeptide is D-Ala-D/L-Ala epimerase (tfdD) (Cytophaga hutchinsonii (strain ATCC 33406 / DSM 1761 / CIP 103989 / NBRC 15051 / NCIMB 9469 / D465)).